Consider the following 314-residue polypeptide: Phosphoribosylaminoimidazole-succinocarboxamide synthase (314 aa).

It belongs to the SAICAR synthetase family.

The enzyme catalyses 5-amino-1-(5-phospho-D-ribosyl)imidazole-4-carboxylate + L-aspartate + ATP = (2S)-2-[5-amino-1-(5-phospho-beta-D-ribosyl)imidazole-4-carboxamido]succinate + ADP + phosphate + 2 H(+). It participates in purine metabolism; IMP biosynthesis via de novo pathway; 5-amino-1-(5-phospho-D-ribosyl)imidazole-4-carboxamide from 5-amino-1-(5-phospho-D-ribosyl)imidazole-4-carboxylate: step 1/2. The sequence is that of Phosphoribosylaminoimidazole-succinocarboxamide synthase from Bacteroides fragilis (strain ATCC 25285 / DSM 2151 / CCUG 4856 / JCM 11019 / LMG 10263 / NCTC 9343 / Onslow / VPI 2553 / EN-2).